Consider the following 149-residue polypeptide: Large ribosomal subunit protein bL9 (149 aa).

Belongs to the bacterial ribosomal protein bL9 family.

Functionally, binds to the 23S rRNA. This is Large ribosomal subunit protein bL9 from Salmonella agona (strain SL483).